A 1233-amino-acid chain; its full sequence is ATP-dependent helicase/nuclease subunit A (1233 aa).

The UvrD-like helicase ATP-binding domain maps to 3–474 (TKWTEEQKQA…ILLYKNFRSR (472 aa)). 24 to 31 (AAAGSGKT) contributes to the ATP binding site. Positions 518-809 (VTGGAVELHL…RIMSIHKSKG (292 aa)) constitute a UvrD-like helicase C-terminal domain. The disordered stretch occupies residues 533–555 (VEEEVEEKEEEKNEEKDFEEEEE).

It belongs to the helicase family. AddA subfamily. Heterodimer of AddA and AddB/RexB. Mg(2+) serves as cofactor.

The enzyme catalyses Couples ATP hydrolysis with the unwinding of duplex DNA by translocating in the 3'-5' direction.. It catalyses the reaction ATP + H2O = ADP + phosphate + H(+). Its function is as follows. The heterodimer acts as both an ATP-dependent DNA helicase and an ATP-dependent, dual-direction single-stranded exonuclease. Recognizes the chi site generating a DNA molecule suitable for the initiation of homologous recombination. The AddA nuclease domain is required for chi fragment generation; this subunit has the helicase and 3' -&gt; 5' nuclease activities. The protein is ATP-dependent helicase/nuclease subunit A of Thermoanaerobacter pseudethanolicus (strain ATCC 33223 / 39E) (Clostridium thermohydrosulfuricum).